Reading from the N-terminus, the 235-residue chain is UPF0702 transmembrane protein YdfS (235 aa).

A run of 2 helical transmembrane segments spans residues 32 to 52 (MTIF…GLAY) and 60 to 80 (NMAI…FLSI).

The protein belongs to the UPF0702 family.

It localises to the cell membrane. This is UPF0702 transmembrane protein YdfS (ydfS) from Bacillus subtilis (strain 168).